A 245-amino-acid chain; its full sequence is D-aminoacyl-tRNA deacylase (245 aa).

The protein belongs to the DtdA deacylase family. As to quaternary structure, monomer. Zn(2+) serves as cofactor.

It catalyses the reaction a D-aminoacyl-tRNA + H2O = a tRNA + a D-alpha-amino acid + H(+). The enzyme catalyses glycyl-tRNA(Ala) + H2O = tRNA(Ala) + glycine + H(+). Functionally, D-aminoacyl-tRNA deacylase with broad substrate specificity. By recycling D-aminoacyl-tRNA to D-amino acids and free tRNA molecules, this enzyme counteracts the toxicity associated with the formation of D-aminoacyl-tRNA entities in vivo. In Ignicoccus hospitalis (strain KIN4/I / DSM 18386 / JCM 14125), this protein is D-aminoacyl-tRNA deacylase.